Reading from the N-terminus, the 194-residue chain is UPF0301 protein FTH_1193 (194 aa).

Belongs to the UPF0301 (AlgH) family.

This chain is UPF0301 protein FTH_1193, found in Francisella tularensis subsp. holarctica (strain OSU18).